Here is a 729-residue protein sequence, read N- to C-terminus: Heterogeneous nuclear ribonucleoprotein M (729 aa).

A compositionally biased stretch (low complexity) spans 1–13 (MAAGVEAAAEVAA). Residues 1-65 (MAAGVEAAAE…GGNRFEPYSN (65 aa)) are disordered. Position 2 is an N-acetylalanine (alanine 2). Residue lysine 17 forms a Glycyl lysine isopeptide (Lys-Gly) (interchain with G-Cter in SUMO2) linkage. Serine 29 is modified (phosphoserine). Glycyl lysine isopeptide (Lys-Gly) (interchain with G-Cter in SUMO2) cross-links involve residues lysine 37, lysine 68, and lysine 82. The span at 37 to 49 (KGEERPTQNEKRK) shows a compositional bias: basic and acidic residues. RRM domains are found at residues 70–148 (YRAF…EDPD) and 203–280 (STVF…MDER). Position 85 is a phosphoserine (serine 85). Residues lysine 87 and lysine 126 each participate in a glycyl lysine isopeptide (Lys-Gly) (interchain with G-Cter in SUMO2) cross-link. Lysine 133 carries the post-translational modification N6-acetyllysine; alternate. Lysine 133 is covalently cross-linked (Glycyl lysine isopeptide (Lys-Gly) (interchain with G-Cter in SUMO2); alternate). Residues lysine 142 and lysine 144 each participate in a glycyl lysine isopeptide (Lys-Gly) (interchain with G-Cter in SUMO2) cross-link. At serine 203 the chain carries Phosphoserine. Lysine 220 participates in a covalent cross-link: Glycyl lysine isopeptide (Lys-Gly) (interchain with G-Cter in SUMO2). At lysine 276 the chain carries N6-acetyllysine; alternate. Lysine 276 is covalently cross-linked (Glycyl lysine isopeptide (Lys-Gly) (interchain with G-Cter in SUMO2); alternate). Glycyl lysine isopeptide (Lys-Gly) (interchain with G-Cter in SUMO2) cross-links involve residues lysine 284 and lysine 344. Phosphoserine occurs at positions 364 and 376. Glycyl lysine isopeptide (Lys-Gly) (interchain with G-Cter in SUMO2) cross-links involve residues lysine 380 and lysine 387. Serine 396 bears the Phosphoserine mark. A run of 4 repeats spans residues 399-404 (GIERMG), 406-411 (GIDRIS), 414-419 (GMERMG), and 425-430 (GMDRVG). The 27 X 6 AA repeats of [GEVSTPAN]-[ILMV]-[DE]-[RH]-[MLVI]-[GAV] stretch occupies residues 399-607 (GIERMGPGID…ALGAGIERMG (209 aa)). Serine 431 is subject to Phosphoserine. 3 consecutive repeat copies span residues 432-437 (EIERMG), 439-444 (VMDRMG), and 445-450 (SVERMG). Serine 451 carries the phosphoserine modification. 4 consecutive repeat copies span residues 452–457 (SIERMG), 460–465 (GLDHMA), 467–472 (SIERMG), and 474–479 (TMERIG). A Phosphoserine modification is found at serine 467. Position 480 is a phosphoserine (serine 480). Repeat copies occupy residues 481 to 486 (GVERMG), 492 to 497 (GLERMA), 499 to 504 (PIDRVG), 506 to 511 (TIERMG), 513 to 518 (GVERMG), 520 to 525 (AIERMG), 527 to 532 (SMDRMV), 539 to 544 (SLERMG), 546 to 551 (VMDRMA), 553 to 558 (GLERMG), 561 to 566 (NLERMG), 567 to 571 (LERMG), 574 to 579 (SLERMG), 580 to 584 (LERMG), 587 to 592 (SLERMG), and 602 to 607 (GIERMG). Arginine 495 carries the post-translational modification Omega-N-methylarginine. Position 527 is a phosphoserine (serine 527). Serine 574 is modified (phosphoserine). Residue serine 587 is modified to Phosphoserine. Serine 617, serine 632, and serine 636 each carry phosphoserine. Residue lysine 650 forms a Glycyl lysine isopeptide (Lys-Gly) (interchain with G-Cter in SUMO2) linkage. Residues 652-728 (CQIFVRNLPF…REIDVRIDRN (77 aa)) enclose the RRM 3 domain. Position 664 is a phosphothreonine (threonine 664). Lysine 666 participates in a covalent cross-link: Glycyl lysine isopeptide (Lys-Gly) (interchain with G-Cter in SUMO2). Lysine 671 carries the post-translational modification N6-acetyllysine. Glycyl lysine isopeptide (Lys-Gly) (interchain with G-Cter in SUMO2) cross-links involve residues lysine 684 and lysine 691. An N6-acetyllysine; alternate modification is found at lysine 697. Lysine 697 participates in a covalent cross-link: Glycyl lysine isopeptide (Lys-Gly) (interchain with G-Cter in SUMO2); alternate. Residue lysine 697 forms a Glycyl lysine isopeptide (Lys-Gly) (interchain with G-Cter in SUMO1); alternate linkage. Serine 700 carries the phosphoserine modification. Residue lysine 715 forms a Glycyl lysine isopeptide (Lys-Gly) (interchain with G-Cter in SUMO2) linkage.

Identified in the spliceosome C complex. Interacts with PPIA/CYPA. Sumoylated.

Its subcellular location is the nucleus. Functionally, pre-mRNA binding protein in vivo, binds avidly to poly(G) and poly(U) RNA homopolymers in vitro. Involved in splicing. Acts as a receptor for carcinoembryonic antigen in Kupffer cells, may initiate a series of signaling events leading to tyrosine phosphorylation of proteins and induction of IL-1 alpha, IL-6, IL-10 and tumor necrosis factor alpha cytokines. The polypeptide is Heterogeneous nuclear ribonucleoprotein M (Hnrnpm) (Mus musculus (Mouse)).